The sequence spans 474 residues: MAFSHIEGLYFYNTASQKKELFFPNHTPVRLYTCGPTVYDYAHIGNFRTYVFEDILKRTLVFFGYSVTHVMNITDVEDKTIAGASKKNIPLQEYTQPYTEAFFEDLDTLNIARADFYPHATHYIPQMIQAITKLLEQGIAYIGQDASVYFSLNRFPNYGKLSHLDLSSLRCCSRISADEYDKENPSDFVLWKAYNPERDGVIYWESPFGKGRPGWHLECSIMAMELLGDSLDIHAGGVDNIFPHHENEIAQSEALSGKPFARYWLHSEHLLIDGKKMSKSLGNFLTLRDLLHQEFTGQEVRYMLLQSHYRTQLNFTEEALLACRHALRRLKDFVSRLEGVDLPGESPLPRTLDSSSQFIEAFSRALANDLNVSTGFASLFDFVHEINTLIDQGHFSKADSLYILDTLKKVDTVLGVLPLTTSVCIPETVMQLVAEREEARKTKNWAMADTLRDEILAAGFLVEDSKSGPKVKPL.

Cys-34 lines the Zn(2+) pocket. A 'HIGH' region motif is present at residues 36 to 46 (PTVYDYAHIGN). 3 residues coordinate Zn(2+): Cys-219, His-244, and Glu-248. Positions 276 to 280 (KMSKS) match the 'KMSKS' region motif. Lys-279 contacts ATP.

The protein belongs to the class-I aminoacyl-tRNA synthetase family. Monomer. It depends on Zn(2+) as a cofactor.

The protein resides in the cytoplasm. The enzyme catalyses tRNA(Cys) + L-cysteine + ATP = L-cysteinyl-tRNA(Cys) + AMP + diphosphate. This chain is Cysteine--tRNA ligase (cysS), found in Chlamydia pneumoniae (Chlamydophila pneumoniae).